A 105-amino-acid chain; its full sequence is Nitrogen fixation nifHD region glnB-like protein 1 (105 aa).

Belongs to the P(II) protein family.

Functionally, could be involved in the regulation of nitrogen fixation. This Methanococcus maripaludis (strain DSM 14266 / JCM 13030 / NBRC 101832 / S2 / LL) protein is Nitrogen fixation nifHD region glnB-like protein 1 (glnBI).